Reading from the N-terminus, the 234-residue chain is Phosphoribosylaminoimidazole-succinocarboxamide synthase (234 aa).

It belongs to the SAICAR synthetase family.

It catalyses the reaction 5-amino-1-(5-phospho-D-ribosyl)imidazole-4-carboxylate + L-aspartate + ATP = (2S)-2-[5-amino-1-(5-phospho-beta-D-ribosyl)imidazole-4-carboxamido]succinate + ADP + phosphate + 2 H(+). It functions in the pathway purine metabolism; IMP biosynthesis via de novo pathway; 5-amino-1-(5-phospho-D-ribosyl)imidazole-4-carboxamide from 5-amino-1-(5-phospho-D-ribosyl)imidazole-4-carboxylate: step 1/2. The sequence is that of Phosphoribosylaminoimidazole-succinocarboxamide synthase from Staphylococcus aureus (strain COL).